The sequence spans 361 residues: Alanine racemase (361 aa).

The Proton acceptor; specific for D-alanine role is filled by K34. The residue at position 34 (K34) is an N6-(pyridoxal phosphate)lysine. Position 129 (R129) interacts with substrate. Y256 functions as the Proton acceptor; specific for L-alanine in the catalytic mechanism. M304 contacts substrate.

It belongs to the alanine racemase family. Pyridoxal 5'-phosphate serves as cofactor.

The catalysed reaction is L-alanine = D-alanine. It participates in amino-acid biosynthesis; D-alanine biosynthesis; D-alanine from L-alanine: step 1/1. Catalyzes the interconversion of L-alanine and D-alanine. May also act on other amino acids. The sequence is that of Alanine racemase (alr) from Corynebacterium glutamicum (strain R).